The primary structure comprises 379 residues: Type II methyltransferase M.CvrRI (379 aa).

It belongs to the N(4)/N(6)-methyltransferase family.

It catalyses the reaction a 2'-deoxyadenosine in DNA + S-adenosyl-L-methionine = an N(6)-methyl-2'-deoxyadenosine in DNA + S-adenosyl-L-homocysteine + H(+). A gamma subtype methylase, recognizes the double-stranded sequence 5'-TGCA-3', methylates A-4 on both strands, and protects the DNA from cleavage by the CviRI endonuclease. The sequence is that of Type II methyltransferase M.CvrRI (CVIRIM) from Chlorella (PBCV-XZ-6E).